The following is a 649-amino-acid chain: Acid beta-fructofuranosidase (649 aa).

The Cytoplasmic segment spans residues 1-22 (MEHHKPLLPTSSHAAPTSSTRK). Positions 1-101 (MEHHKPLLPT…NLLFAGEGGA (101 aa)) are cleaved as a propeptide — removed in mature form. Residues 23–43 (DLLFVLCGLLFLSSLVAYGGY) traverse the membrane as a helical; Signal-anchor for type II membrane protein segment. At 44–649 (RASGVPHAHL…PFPFNPDQKS (606 aa)) the chain is on the lumenal side. The tract at residues 52–75 (HLSSPTSNHQQDHQSPTSLPSSKW) is disordered. Residues 54-72 (SSPTSNHQQDHQSPTSLPS) show a composition bias toward polar residues. Residues 127–130 (WMND), Q146, W154, and 189–190 (WT) each bind substrate. D130 is an active-site residue. A glycan (N-linked (GlcNAc...) (complex) asparagine) is linked at N210. 253–254 (RD) is a substrate binding site. N-linked (GlcNAc...) (complex) asparagine glycosylation occurs at N275. 2 residues coordinate substrate: E308 and D341. Cysteines 498 and 546 form a disulfide. N618 is a glycosylation site (N-linked (GlcNAc...) (high mannose) asparagine).

The protein belongs to the glycosyl hydrolase 32 family. As to quaternary structure, present in two forms, a 70 kDa monomer and a heterodimer of the 30 kDa and 38 kDa subunits. The ratio of the levels of the two forms within cells appears to be regulated developmentally.

The protein resides in the membrane. Its subcellular location is the vacuole lumen. The enzyme catalyses Hydrolysis of terminal non-reducing beta-D-fructofuranoside residues in beta-D-fructofuranosides.. It participates in glycan biosynthesis; sucrose metabolism. In terms of biological role, possible role in the continued mobilization of sucrose to sink organs. The protein is Acid beta-fructofuranosidase (INVA) of Vigna radiata var. radiata (Mung bean).